The sequence spans 232 residues: Phosphoribosylformylglycinamidine synthase subunit PurQ (232 aa).

The region spanning 3 to 232 (FAVIVFPGSN…SLVASALAVV (230 aa)) is the Glutamine amidotransferase type-1 domain. Cysteine 86 serves as the catalytic Nucleophile. Residues histidine 203 and glutamate 205 contribute to the active site.

In terms of assembly, part of the FGAM synthase complex composed of 1 PurL, 1 PurQ and 2 PurS subunits.

Its subcellular location is the cytoplasm. It carries out the reaction N(2)-formyl-N(1)-(5-phospho-beta-D-ribosyl)glycinamide + L-glutamine + ATP + H2O = 2-formamido-N(1)-(5-O-phospho-beta-D-ribosyl)acetamidine + L-glutamate + ADP + phosphate + H(+). The catalysed reaction is L-glutamine + H2O = L-glutamate + NH4(+). It functions in the pathway purine metabolism; IMP biosynthesis via de novo pathway; 5-amino-1-(5-phospho-D-ribosyl)imidazole from N(2)-formyl-N(1)-(5-phospho-D-ribosyl)glycinamide: step 1/2. Functionally, part of the phosphoribosylformylglycinamidine synthase complex involved in the purines biosynthetic pathway. Catalyzes the ATP-dependent conversion of formylglycinamide ribonucleotide (FGAR) and glutamine to yield formylglycinamidine ribonucleotide (FGAM) and glutamate. The FGAM synthase complex is composed of three subunits. PurQ produces an ammonia molecule by converting glutamine to glutamate. PurL transfers the ammonia molecule to FGAR to form FGAM in an ATP-dependent manner. PurS interacts with PurQ and PurL and is thought to assist in the transfer of the ammonia molecule from PurQ to PurL. In Gloeobacter violaceus (strain ATCC 29082 / PCC 7421), this protein is Phosphoribosylformylglycinamidine synthase subunit PurQ.